Here is a 104-residue protein sequence, read N- to C-terminus: UPF0213 protein plu4503 (104 aa).

Positions 4–79 (NQWVLYLLKT…KQLSKQQKER (76 aa)) constitute a GIY-YIG domain.

The protein belongs to the UPF0213 family.

The chain is UPF0213 protein plu4503 from Photorhabdus laumondii subsp. laumondii (strain DSM 15139 / CIP 105565 / TT01) (Photorhabdus luminescens subsp. laumondii).